The sequence spans 442 residues: D(2) dopamine receptor A (442 aa).

Topologically, residues 1–31 (MDPQNLSMYNDDINNGTNGTAVDQKPHYNYY) are extracellular. 3 N-linked (GlcNAc...) asparagine glycosylation sites follow: Asn5, Asn15, and Asn18. The helical transmembrane segment at 32–54 (AMLLTLLVFVIVFGNVLVCIAVS) threads the bilayer. At 55 to 64 (REKALQTTTN) the chain is on the cytoplasmic side. Residues 65 to 87 (YLIVSLAVADLLVATLVMPWAVY) traverse the membrane as a helical segment. Over 88–102 (MEVVGEWRFSRIHCD) the chain is Extracellular. Cysteines 101 and 176 form a disulfide. A helical membrane pass occupies residues 103–124 (IFVTLDVMMCTASILNLCAISI). Topologically, residues 125–145 (DRYTAVAMPMLYNTRYSSKRR) are cytoplasmic. Residues 146–166 (VTVMISVVWVLSFAISCPLLF) traverse the membrane as a helical segment. The Extracellular segment spans residues 167–182 (GLNNTGSKVCIIDNPA). Residues 183 to 207 (FVIYSSIVSFYVPFIVTLLVYVQIY) traverse the membrane as a helical segment. Residues 208–372 (IVLRKRRKRV…SQHKEKKATQ (165 aa)) are Cytoplasmic-facing. The segment at 273–335 (DMEMEMMSST…KNGHPKDSTK (63 aa)) is disordered. Residues 304 to 318 (ATSNQCKNASLTSPV) are compositionally biased toward polar residues. The span at 322–335 (YKAEKNGHPKDSTK) shows a compositional bias: basic and acidic residues. The chain crosses the membrane as a helical span at residues 373–394 (MLAIVLGVFIICWLPFFIIHIL). The Extracellular portion of the chain corresponds to 395-408 (NMHCNCNIPQALYS). Cys398 and Cys400 are oxidised to a cystine. A helical membrane pass occupies residues 409-430 (AFTWLGYVNSAVNPIIYTTFNV). The Cytoplasmic segment spans residues 431–442 (EFRKAFIKILHC). Cys442 is lipidated: S-palmitoyl cysteine.

This sequence belongs to the G-protein coupled receptor 1 family. Palmitoylated. Palmitoylation is probably required for proper localization to the plasma membrane and stability of the receptor. As to expression, brain; pituitary.

It is found in the cell membrane. It localises to the golgi apparatus membrane. This is one of the five types (D1 to D5) of receptors for dopamine. The activity of this receptor is mediated by G proteins which inhibits adenylyl cyclase. In Xenopus D2R is involved in the regulation of the melanotrope cells of the intermediate pituitary during background adaptation of the animal. In Xenopus laevis (African clawed frog), this protein is D(2) dopamine receptor A (drd2-a).